A 507-amino-acid polypeptide reads, in one-letter code: MAVVVSNANAPAFEAKMTVYVFICVMIAAVGGLIFGYDIGISGGVSAMDDFLKEFFPAVWERKKHVHENNYCKYDNQFLQLFTSSLYLAALVASFVASATCSKLGRRPTMQFASIFFLIGVGLTAGAVNLVMLIIGRLFLGFGVGFGNQAVPLFLSEIAPAQLRGGLNIVFQLMVTIGILIANIVNYFTATVHPYGWRIALGGAGIPAVILLFGSLLIIETPTSLIERNKNEEGKEALRKIRGVDDINDEYESIVHACDIASQVKDPYRKLLKPASRPPFIIGMLLQLFQQFTGINAIMFYAPVLFQTVGFGSDAALLSAVITGSINVLATFVGIYLVDRTGRRFLLLQSSVHMLICQLIIGIILAKDLGVTGTLGRPQALVVVIFVCVYVMGFAWSWGPLGWLIPSETFPLETRSAGFAVAVSCNMFFTFVIAQAFLSMLCGMRSGIFFFFSGWIIVMGLFAFFFIPETKGIAIDDMRESVWKPHWFWKRYMLPEDDHHDIEKRNA.

Residues 1–20 (MAVVVSNANAPAFEAKMTVY) are Cytoplasmic-facing. 12 helical membrane passes run 21 to 41 (VFICVMIAAVGGLIFGYDIGI), 78 to 98 (FLQLFTSSLYLAALVASFVAS), 115 to 135 (IFFLIGVGLTAGAVNLVMLII), 138 to 158 (LFLGFGVGFGNQAVPLFLSEI), 165 to 185 (GGLNIVFQLMVTIGILIANIV), 199 to 219 (IALGGAGIPAVILLFGSLLII), 280 to 300 (FIIGMLLQLFQQFTGINAIMF), 318 to 338 (LSAVITGSINVLATFVGIYLV), 345 to 365 (FLLLQSSVHMLICQLIIGIIL), 381 to 401 (LVVVIFVCVYVMGFAWSWGPL), 418 to 438 (GFAVAVSCNMFFTFVIAQAFL), and 447 to 467 (GIFFFFSGWIIVMGLFAFFFI). The Cytoplasmic segment spans residues 468–507 (PETKGIAIDDMRESVWKPHWFWKRYMLPEDDHHDIEKRNA).

The protein belongs to the major facilitator superfamily. Sugar transporter (TC 2.A.1.1) family. In terms of tissue distribution, pollen specific.

It is found in the membrane. Inhibited by uncouplers such as 2,4-dinitrophenol and carbonyl cyanide-m-chlorophenyl-hydrazone. In terms of biological role, mediates an active uptake of hexoses, probably by sugar/hydrogen symport. Can transport glucose, 3-O-methylglucose, mannose, fructose and galactose, and, to a lower extent, xylose and ribulose. This Arabidopsis thaliana (Mouse-ear cress) protein is Sugar transport protein 6 (STP6).